Consider the following 159-residue polypeptide: MRIGFGLDVHKLVENRKLILGGVEIPHDKGLLGHSDADVLIHAIMDAICGALCLGDIGKLFPDTDMKYKDIDSRVLLRKVFEIMDDMGYEIGNIDSTISCQKPKLRDYIDKMRENIAQDLHTNTFNISVKATTTEQLGFEGRCEGITANSVCILNKKDL.

A divalent metal cation contacts are provided by Asp-8 and His-10. Residues 8-10 (DVH) and 34-35 (HS) each bind 4-CDP-2-C-methyl-D-erythritol 2-phosphate. His-42 provides a ligand contact to a divalent metal cation. Residues 56–58 (DIG), 61–65 (FPDTD), 132–135 (TTTE), Phe-139, and Arg-142 each bind 4-CDP-2-C-methyl-D-erythritol 2-phosphate.

The protein belongs to the IspF family. Homotrimer. The cofactor is a divalent metal cation.

The catalysed reaction is 4-CDP-2-C-methyl-D-erythritol 2-phosphate = 2-C-methyl-D-erythritol 2,4-cyclic diphosphate + CMP. It functions in the pathway isoprenoid biosynthesis; isopentenyl diphosphate biosynthesis via DXP pathway; isopentenyl diphosphate from 1-deoxy-D-xylulose 5-phosphate: step 4/6. In terms of biological role, involved in the biosynthesis of isopentenyl diphosphate (IPP) and dimethylallyl diphosphate (DMAPP), two major building blocks of isoprenoid compounds. Catalyzes the conversion of 4-diphosphocytidyl-2-C-methyl-D-erythritol 2-phosphate (CDP-ME2P) to 2-C-methyl-D-erythritol 2,4-cyclodiphosphate (ME-CPP) with a corresponding release of cytidine 5-monophosphate (CMP). In Finegoldia magna (strain ATCC 29328 / DSM 20472 / WAL 2508) (Peptostreptococcus magnus), this protein is 2-C-methyl-D-erythritol 2,4-cyclodiphosphate synthase.